The sequence spans 561 residues: Inner membrane ABC transporter ATP-binding protein YddA (561 aa).

Topologically, residues 1–3 are cytoplasmic; the sequence is MIT. The chain crosses the membrane as a helical span at residues 4-24; the sequence is IPITLRMLIAKYLCLLKPFWL. Topologically, residues 25–31 are periplasmic; the sequence is RKNNKTS. A helical membrane pass occupies residues 32 to 52; it reads VLLIIIILAMILGVVKIQVWL. Residues 35–337 form the ABC transmembrane type-1 domain; the sequence is IIIILAMILG…FIYKYDELAE (303 aa). Topologically, residues 53-70 are cytoplasmic; it reads NDWNNDFFNALSQKETDK. Residues 71–91 traverse the membrane as a helical segment; the sequence is LWQLVLWFPALLGIFVLISVN. Residues 92–151 are Periplasmic-facing; that stretch reads KTWLIKLLTIRWREWLTDYYLNRWFADKNYYFTQIYGEHKNTDNPDQRIAEDILLLISKT. The helical transmembrane segment at 152 to 172 threads the bilayer; the sequence is LSLSFGFIQSLSMLITFTVIL. Topologically, residues 173-187 are cytoplasmic; sequence WESAGTLSFTVGGTE. A helical membrane pass occupies residues 188-208; that stretch reads WNIQGYMVYTVVLIVIGGTLF. At 209 to 290 the chain is on the periplasmic side; sequence THKVGKRIRP…WQNIYSRSLS (82 aa). The chain crosses the membrane as a helical span at residues 291 to 311; the sequence is VLPYFLLLPQFISGQINLGGL. The Cytoplasmic portion of the chain corresponds to 312–561; it reads MKSRQAFMLV…DDICDISAVL (250 aa). Residues 367–561 form the ABC transporter domain; it reads VQVADASIRT…DDICDISAVL (195 aa). Residue 400–407 participates in ATP binding; that stretch reads GYSGAGKT.

The protein belongs to the ABC transporter superfamily.

The protein resides in the cell inner membrane. This Escherichia coli (strain K12) protein is Inner membrane ABC transporter ATP-binding protein YddA (yddA).